Reading from the N-terminus, the 1617-residue chain is Mitogen-activated protein kinase kinae kinase bck1 (1617 aa).

Disordered stretches follow at residues 1–73 (MDGQ…SQLQ), 167–199 (GPVHHLYESSGGDGSAYKRDGTVPPTPSARTMP), 211–253 (SVAS…GGMS), 345–399 (RQIH…SPNL), 455–555 (DHRR…SSSY), 568–633 (KRSK…LRGK), 739–820 (GVPL…ISPE), 832–1144 (EHKR…RGDI), and 1165–1277 (IDLD…EILR). A compositionally biased stretch (low complexity) spans 19-28 (TQPSQSHMLS). Positions 44-60 (VMPPPPPGPPPGPPPGP) are enriched in pro residues. Residues 220–248 (TAQNHQSQTGQTNEPTKSPSHRQNNSNTL) show a composition bias toward polar residues. The span at 482-504 (KSGSPATQHATLNQGLSSSSTGD) shows a compositional bias: polar residues. Over residues 524–533 (RYYESRKGQE) the composition is skewed to basic and acidic residues. Polar residues-rich tracts occupy residues 535–555 (IRPSPQEMCSRQWTGETSSSY) and 586–596 (ESPTSPVNLRQ). Composition is skewed to basic and acidic residues over residues 832–841 (EHKREVERKQ) and 871–885 (FDERRVSPYEDKKAD). 2 stretches are compositionally biased toward polar residues: residues 897–907 (PQESYTLTRIN) and 956–980 (GGKQTNFGSFGSPTQGNTKSAPQSS). Basic and acidic residues-rich tracts occupy residues 1128-1140 (EDERPTPRRDSFA) and 1189-1198 (PENDLHKKEN). Composition is skewed to polar residues over residues 1199–1208 (QPSSSYTGEM) and 1257–1272 (NQASRSRSIHTGNQKS). The region spanning 1323-1596 (IIRGQLIGKG…QTLLTRHPFC (274 aa)) is the Protein kinase domain. Residues 1329 to 1337 (IGKGTYGRV) and lysine 1352 each bind ATP.

The protein belongs to the protein kinase superfamily. STE Ser/Thr protein kinase family. MAP kinase kinase kinase subfamily.

The enzyme catalyses L-seryl-[protein] + ATP = O-phospho-L-seryl-[protein] + ADP + H(+). It catalyses the reaction L-threonyl-[protein] + ATP = O-phospho-L-threonyl-[protein] + ADP + H(+). Functionally, mitogen-activated protein kinase kinase kinase; part of cell wall integrity (CWI) signaling pathway composed of pkcA, the bck1-mkk2-mpka MAPK cascade and the downstream rlmA transcription regulator. The CWI signaling pathway regulates cell wall integrity and pyomelanin formation. CWI also controls oxidative stress response, gliotoxin production, iron adaptation and asexual development. Finally, CWI is constitutively required for A.fumigatus to cope with the temperature increase found in the mammalian lung environment, during infection. This chain is Mitogen-activated protein kinase kinae kinase bck1, found in Aspergillus fumigatus (strain ATCC MYA-4609 / CBS 101355 / FGSC A1100 / Af293) (Neosartorya fumigata).